Reading from the N-terminus, the 213-residue chain is Histone H1.2 (213 aa).

Over residues 1-17 (MSETAPAAPAAAPPAEK) the composition is skewed to low complexity. A disordered region spans residues 1-41 (MSETAPAAPAAAPPAEKTPVKKKAAKKPAGARRKASGPPVS). The residue at position 2 (serine 2) is an N-acetylserine; partial. Serine 2 carries the post-translational modification Phosphoserine. At lysine 17 the chain carries N6-acetyllysine. A compositionally biased stretch (basic residues) spans 20 to 35 (VKKKAAKKPAGARRKA). Lysine 23, lysine 26, and lysine 27 each carry N6-(2-hydroxyisobutyryl)lysine. Lysine 34 carries the post-translational modification N6-(beta-hydroxybutyryl)lysine; alternate. Lysine 34 carries the post-translational modification N6-crotonyllysine; alternate. At lysine 34 the chain carries N6-methyllysine; alternate. The region spanning 36–109 (SGPPVSELIT…GASGSFKLNK (74 aa)) is the H15 domain. Position 46 is an N6-(2-hydroxyisobutyryl)lysine (lysine 46). Residue lysine 52 is modified to N6-(beta-hydroxybutyryl)lysine; alternate. Position 52 is an N6-(2-hydroxyisobutyryl)lysine; alternate (lysine 52). The residue at position 54 (arginine 54) is a Citrulline. Position 63 is an N6-(2-hydroxyisobutyryl)lysine (lysine 63). Lysine 64 is subject to N6-(beta-hydroxybutyryl)lysine; alternate. The residue at position 64 (lysine 64) is an N6-crotonyllysine; alternate. Lysine 64 is subject to N6-(2-hydroxyisobutyryl)lysine; alternate. Residues lysine 75 and lysine 81 each carry the N6-(2-hydroxyisobutyryl)lysine modification. N6-(beta-hydroxybutyryl)lysine; alternate is present on residues lysine 85 and lysine 90. An N6-crotonyllysine; alternate mark is found at lysine 85, lysine 90, and lysine 97. Lysine 85, lysine 90, and lysine 97 each carry N6-(2-hydroxyisobutyryl)lysine; alternate. Residues 95 to 213 (QTKGTGASGS…KPKKAAPKKK (119 aa)) form a disordered region. N6-succinyllysine; alternate is present on lysine 97. A Phosphoserine; by PKC modification is found at serine 104. Lysine 106 bears the N6-(beta-hydroxybutyryl)lysine mark. Residues lysine 110, lysine 117, lysine 121, lysine 129, and lysine 136 each carry the N6-(2-hydroxyisobutyryl)lysine modification. Residues 119-140 (KAKKAGAAKPKKAAGAAKKTKK) are compositionally biased toward basic residues. Phosphothreonine is present on threonine 146. The residue at position 148 (lysine 148) is an N6-(2-hydroxyisobutyryl)lysine. Basic residues predominate over residues 149–160 (KTAKKTPKKAKK). N6-crotonyllysine; alternate is present on residues lysine 159 and lysine 168. N6-(2-hydroxyisobutyryl)lysine; alternate occurs at positions 159 and 168. Positions 169–186 (KVAKSPKKAKAAKPKKAA) are enriched in basic residues. N6-methyllysine; by EHMT1 and EHMT2 is present on lysine 187. Serine 188 bears the ADP-ribosylserine mark. Over residues 193 to 213 (VKPKAAKPKVAKPKKAAPKKK) the composition is skewed to basic residues.

This sequence belongs to the histone H1/H5 family. Post-translationally, H1 histones are progressively phosphorylated during the cell cycle, becoming maximally phosphorylated during late G2 phase and M phase, and being dephosphorylated sharply thereafter. Crotonylation (Kcr) is specifically present in male germ cells and marks testis-specific genes in post-meiotic cells, including X-linked genes that escape sex chromosome inactivation in haploid cells. Crotonylation marks active promoters and enhancers and confers resistance to transcriptional repressors. It is also associated with post-meiotically activated genes on autosomes. In terms of processing, ADP-ribosylated on Ser-188 in response to DNA damage. Post-translationally, citrullination at Arg-54 (H1R54ci) by PADI4 takes place within the DNA-binding site of H1 and results in its displacement from chromatin and global chromatin decondensation, thereby promoting pluripotency and stem cell maintenance.

Its subcellular location is the nucleus. The protein resides in the chromosome. In terms of biological role, histone H1 protein binds to linker DNA between nucleosomes forming the macromolecular structure known as the chromatin fiber. Histones H1 are necessary for the condensation of nucleosome chains into higher-order structured fibers. Also acts as a regulator of individual gene transcription through chromatin remodeling, nucleosome spacing and DNA methylation. This is Histone H1.2 from Bos taurus (Bovine).